A 236-amino-acid polypeptide reads, in one-letter code: DNA repair protein RecO (236 aa).

The protein belongs to the RecO family.

Functionally, involved in DNA repair and RecF pathway recombination. This Haemophilus influenzae (strain 86-028NP) protein is DNA repair protein RecO.